The sequence spans 305 residues: Probable cell division protein WhiA (305 aa).

Positions 269 to 302 (TIKELGELLDPPLGKSGVNHRLRKLVERSNDLKK) form a DNA-binding region, H-T-H motif.

The protein belongs to the WhiA family.

Involved in cell division and chromosome segregation. This Lactococcus lactis subsp. cremoris (strain MG1363) protein is Probable cell division protein WhiA.